Reading from the N-terminus, the 183-residue chain is 2-epi-5-epi-valiolone epimerase (183 aa).

The 145-residue stretch at 11–155 (AVHHVAYTVP…WGMQLELINL (145 aa)) folds into the VOC domain. Positions 14, 76, 99, and 151 each coordinate a divalent metal cation.

Homodimer. It depends on a divalent metal cation as a cofactor.

It catalyses the reaction 2-epi-5-epi-valiolone = 5-epi-valiolone. It functions in the pathway antibiotic biosynthesis. Catalyzes the epimerization of 2-epi-5-epi-valiolone to 5-epi-valiolone. Involved in cetoniacytone A biosynthesis. The chain is 2-epi-5-epi-valiolone epimerase from Actinomyces sp.